The following is a 451-amino-acid chain: Phenolic glucoside malonyltransferase 2 (451 aa).

The Proton acceptor role is filled by H165. Positions 165 to 169 (HAVLD) match the HXXXD motif motif. Malonyl-CoA is bound by residues H270 and 272 to 273 (ST). D395 functions as the Proton acceptor in the catalytic mechanism. The short motif at 395 to 399 (DFGWG) is the DFGWG motif element.

This sequence belongs to the plant acyltransferase family. Phenolic glucoside malonyltransferase subfamily.

The enzyme catalyses a flavonol 7-O-beta-D-glucoside + malonyl-CoA = a flavonol 7-O-(6-O-malonyl-beta-D-glucoside) + CoA. Its function is as follows. Malonyltransferase acting on xenobiotic glucosides. Has activity toward 2-Naphthol glucoside (2NAG), 1-Naphthol glucoside (1NAG), kaempferol 7-O-glucoside, hydroxycoumarin glucosides and phenol-glucosides, but not toward kaempferol 3-O-glucoside or daidzin. Prefers phenol glucosides rather than naphtol glucosides. In vivo, seems to be involved in the malonylation of 4-methylumbelliferone glucoside or 4-nitrophenyl glucoside while PMAT1 would be involved in the malonylation of 2-Naphthol glucoside. The sequence is that of Phenolic glucoside malonyltransferase 2 (PMAT2) from Arabidopsis thaliana (Mouse-ear cress).